We begin with the raw amino-acid sequence, 251 residues long: uncharacterized protein (251 aa).

5 helical membrane passes run 22–42 (FLGVIPLFFICFVFVIADIVI), 86–106 (FFLSAFAYIIFTFLGYNVILA), 120–140 (LASSVFLHVLAPIAFLVAGIV), 157–177 (LGYFMIYPLVYGLYLATIPYV), and 205–225 (IVAWPVVICFLFIYFPLSFLA).

It is found in the cell membrane. This is an uncharacterized protein from Mycoplasma pneumoniae (strain ATCC 29342 / M129 / Subtype 1) (Mycoplasmoides pneumoniae).